Consider the following 155-residue polypeptide: MHTFEGDLVAENITIGIVVARFNEFITSKLLAGALDTLKRENVREQDIAVAWVPGAFEIPLIASRMAKSKRYDAIICLGAVIRGSTSHYDYVCNEVSKGIAQTSLDTGVPVLFGVLTTDSIEQAIERAGTKAGNKGSECAQGAIEMVNLIRSMDL.

Residues Phe-22, 56 to 58 (AFE), and 80 to 82 (AVI) contribute to the 5-amino-6-(D-ribitylamino)uracil site. (2S)-2-hydroxy-3-oxobutyl phosphate is bound at residue 85 to 86 (ST). Catalysis depends on His-88, which acts as the Proton donor. Position 113 (Phe-113) interacts with 5-amino-6-(D-ribitylamino)uracil. Arg-127 lines the (2S)-2-hydroxy-3-oxobutyl phosphate pocket.

The protein belongs to the DMRL synthase family.

It carries out the reaction (2S)-2-hydroxy-3-oxobutyl phosphate + 5-amino-6-(D-ribitylamino)uracil = 6,7-dimethyl-8-(1-D-ribityl)lumazine + phosphate + 2 H2O + H(+). It functions in the pathway cofactor biosynthesis; riboflavin biosynthesis; riboflavin from 2-hydroxy-3-oxobutyl phosphate and 5-amino-6-(D-ribitylamino)uracil: step 1/2. In terms of biological role, catalyzes the formation of 6,7-dimethyl-8-ribityllumazine by condensation of 5-amino-6-(D-ribitylamino)uracil with 3,4-dihydroxy-2-butanone 4-phosphate. This is the penultimate step in the biosynthesis of riboflavin. The chain is 6,7-dimethyl-8-ribityllumazine synthase from Bifidobacterium longum subsp. infantis (strain ATCC 15697 / DSM 20088 / JCM 1222 / NCTC 11817 / S12).